The sequence spans 72 residues: ATP synthase protein 8 (72 aa).

A helical transmembrane segment spans residues 16-36; sequence WTLIALFLLFSFLVVSVLPAV.

It belongs to the ATPase protein 8 family. In terms of assembly, F-type ATPases have 2 components, CF(1) - the catalytic core - and CF(0) - the membrane proton channel.

The protein resides in the mitochondrion membrane. Mitochondrial membrane ATP synthase (F(1)F(0) ATP synthase or Complex V) produces ATP from ADP in the presence of a proton gradient across the membrane which is generated by electron transport complexes of the respiratory chain. F-type ATPases consist of two structural domains, F(1) - containing the extramembraneous catalytic core and F(0) - containing the membrane proton channel, linked together by a central stalk and a peripheral stalk. During catalysis, ATP synthesis in the catalytic domain of F(1) is coupled via a rotary mechanism of the central stalk subunits to proton translocation. Part of the complex F(0) domain. Minor subunit located with subunit a in the membrane. This chain is ATP synthase protein 8 (MTATP8), found in Metridium senile (Brown sea anemone).